We begin with the raw amino-acid sequence, 479 residues long: Anaerobic nitric oxide reductase flavorubredoxin (479 aa).

The segment at L30–I210 is zinc metallo-hydrolase. Fe cation is bound by residues H79, E81, D83, H147, D166, and H227. The Flavodoxin-like domain maps to I254 to A393. Residues T260–N264 and A342–L369 each bind FMN. The region spanning G423 to L474 is the Rubredoxin-like domain. Fe cation is bound by residues C428, C431, C461, and C464.

It in the N-terminal section; belongs to the zinc metallo-hydrolase group 3 family. In terms of assembly, homotetramer. Requires Fe cation as cofactor. FMN serves as cofactor.

It is found in the cytoplasm. It participates in nitrogen metabolism; nitric oxide reduction. In terms of biological role, anaerobic nitric oxide reductase; uses NADH to detoxify nitric oxide (NO), protecting several 4Fe-4S NO-sensitive enzymes. Has at least 2 reductase partners, only one of which (NorW, flavorubredoxin reductase) has been identified. NO probably binds to the di-iron center; electrons enter from the NorW at rubredoxin and are transferred sequentially to the FMN center and the di-iron center. Also able to function as an aerobic oxygen reductase. The chain is Anaerobic nitric oxide reductase flavorubredoxin from Escherichia coli (strain UTI89 / UPEC).